The primary structure comprises 248 residues: Proteasome subunit alpha type-1 (248 aa).

It belongs to the peptidase T1A family. In terms of assembly, the 26S proteasome consists of a 20S proteasome core and two 19S regulatory subunits. The 20S proteasome core is composed of 28 subunits that are arranged in four stacked rings, resulting in a barrel-shaped structure. The two end rings are each formed by seven alpha subunits, and the two central rings are each formed by seven beta subunits. The catalytic chamber with the active sites is on the inside of the barrel.

Its subcellular location is the cytoplasm. The protein localises to the nucleus. The proteasome is a multicatalytic proteinase complex which is characterized by its ability to cleave peptides with Arg, Phe, Tyr, Leu, and Glu adjacent to the leaving group at neutral or slightly basic pH. The proteasome has an ATP-dependent proteolytic activity. The protein is Proteasome subunit alpha type-1 (psmA1) of Dictyostelium discoideum (Social amoeba).